The primary structure comprises 121 residues: Large ribosomal subunit protein bL12 (121 aa).

It belongs to the bacterial ribosomal protein bL12 family. As to quaternary structure, homodimer. Part of the ribosomal stalk of the 50S ribosomal subunit. Forms a multimeric L10(L12)X complex, where L10 forms an elongated spine to which 2 to 4 L12 dimers bind in a sequential fashion. Binds GTP-bound translation factors.

In terms of biological role, forms part of the ribosomal stalk which helps the ribosome interact with GTP-bound translation factors. Is thus essential for accurate translation. This chain is Large ribosomal subunit protein bL12, found in Pseudomonas syringae pv. tomato (strain ATCC BAA-871 / DC3000).